A 69-amino-acid polypeptide reads, in one-letter code: Large ribosomal subunit protein bL28 (69 aa).

Belongs to the bacterial ribosomal protein bL28 family.

The sequence is that of Large ribosomal subunit protein bL28 from Oleidesulfovibrio alaskensis (strain ATCC BAA-1058 / DSM 17464 / G20) (Desulfovibrio alaskensis).